A 226-amino-acid polypeptide reads, in one-letter code: Large ribosomal subunit protein uL1 (226 aa).

This sequence belongs to the universal ribosomal protein uL1 family. As to quaternary structure, part of the 50S ribosomal subunit.

Its function is as follows. Binds directly to 23S rRNA. The L1 stalk is quite mobile in the ribosome, and is involved in E site tRNA release. Protein L1 is also a translational repressor protein, it controls the translation of the L11 operon by binding to its mRNA. The sequence is that of Large ribosomal subunit protein uL1 from Mycoplasma pneumoniae (strain ATCC 29342 / M129 / Subtype 1) (Mycoplasmoides pneumoniae).